The sequence spans 296 residues: Ribosomal RNA small subunit methyltransferase A (296 aa).

Asparagine 30, leucine 32, glycine 57, glutamate 78, aspartate 103, and asparagine 128 together coordinate S-adenosyl-L-methionine.

This sequence belongs to the class I-like SAM-binding methyltransferase superfamily. rRNA adenine N(6)-methyltransferase family. RsmA subfamily.

The protein resides in the cytoplasm. The catalysed reaction is adenosine(1518)/adenosine(1519) in 16S rRNA + 4 S-adenosyl-L-methionine = N(6)-dimethyladenosine(1518)/N(6)-dimethyladenosine(1519) in 16S rRNA + 4 S-adenosyl-L-homocysteine + 4 H(+). Specifically dimethylates two adjacent adenosines (A1518 and A1519) in the loop of a conserved hairpin near the 3'-end of 16S rRNA in the 30S particle. May play a critical role in biogenesis of 30S subunits. In Staphylococcus epidermidis (strain ATCC 35984 / DSM 28319 / BCRC 17069 / CCUG 31568 / BM 3577 / RP62A), this protein is Ribosomal RNA small subunit methyltransferase A.